Consider the following 101-residue polypeptide: Alkene monooxygenase system, effector subunit (101 aa).

It belongs to the TmoD/XamoD family. In terms of assembly, monomer. The alkene monooxygenase multicomponent enzyme system is composed of an electron transfer component and a monooxygenase component interacting with the effector protein XamoD. The electron transfer component is composed of a ferredoxin reductase (XamoF) and a ferredoxin (XamoC), and the monooxygenase component is formed by a heterohexamer (dimer of heterotrimers) of two alpha subunits (XamoA), two beta subunits (XamoE) and two gamma subunits (XamoB).

Its subcellular location is the cytoplasm. Functionally, effector component of the alkene monooxygenase multicomponent enzyme system which catalyzes the O2- and NADH-dependent epoxidation of short chain (C2 to C6) alkenes to their corresponding epoxides. One possible role of this small protein might be to facilitate electron transfer between the reductase and ferredoxin components. The protein is Alkene monooxygenase system, effector subunit of Xanthobacter autotrophicus (strain ATCC BAA-1158 / Py2).